The primary structure comprises 499 residues: BTB/POZ domain-containing protein 16 (499 aa).

A BTB domain is found at 143–199 (INDPLVTREAFATALKNLYMQEVKICLDDVLGVLAAAHILQFGSLFQRCVTVMMSGL).

The protein is BTB/POZ domain-containing protein 16 (BTBD16) of Bos taurus (Bovine).